The following is a 207-amino-acid chain: Large ribosomal subunit protein eL13 (207 aa).

The protein belongs to the eukaryotic ribosomal protein eL13 family. As to quaternary structure, component of the 60S large ribosomal subunit (LSU).

It localises to the cytoplasm. Component of the ribosome, a large ribonucleoprotein complex responsible for the synthesis of proteins in the cell. The small ribosomal subunit (SSU) binds messenger RNAs (mRNAs) and translates the encoded message by selecting cognate aminoacyl-transfer RNA (tRNA) molecules. The large subunit (LSU) contains the ribosomal catalytic site termed the peptidyl transferase center (PTC), which catalyzes the formation of peptide bonds, thereby polymerizing the amino acids delivered by tRNAs into a polypeptide chain. The nascent polypeptides leave the ribosome through a tunnel in the LSU and interact with protein factors that function in enzymatic processing, targeting, and the membrane insertion of nascent chains at the exit of the ribosomal tunnel. As part of the LSU, it is probably required for its formation and the maturation of rRNAs. The polypeptide is Large ribosomal subunit protein eL13 (rpl-13) (Caenorhabditis elegans).